A 305-amino-acid chain; its full sequence is UDP-3-O-acyl-N-acetylglucosamine deacetylase (305 aa).

Residues H79, H238, and D242 each contribute to the Zn(2+) site. Residue H265 is the Proton donor of the active site.

Belongs to the LpxC family. The cofactor is Zn(2+).

The enzyme catalyses a UDP-3-O-[(3R)-3-hydroxyacyl]-N-acetyl-alpha-D-glucosamine + H2O = a UDP-3-O-[(3R)-3-hydroxyacyl]-alpha-D-glucosamine + acetate. It functions in the pathway glycolipid biosynthesis; lipid IV(A) biosynthesis; lipid IV(A) from (3R)-3-hydroxytetradecanoyl-[acyl-carrier-protein] and UDP-N-acetyl-alpha-D-glucosamine: step 2/6. In terms of biological role, catalyzes the hydrolysis of UDP-3-O-myristoyl-N-acetylglucosamine to form UDP-3-O-myristoylglucosamine and acetate, the committed step in lipid A biosynthesis. This chain is UDP-3-O-acyl-N-acetylglucosamine deacetylase, found in Shewanella woodyi (strain ATCC 51908 / MS32).